We begin with the raw amino-acid sequence, 168 residues long: Scytalone dehydratase arp1 (168 aa).

Y29 and Y49 together coordinate substrate. Residues H84 and H109 contribute to the active site. Residue N130 participates in substrate binding.

This sequence belongs to the scytalone dehydratase family. In terms of assembly, homotrimer. Each subunit contains an active site, located in the central part of the hydrophobic core of the monomer, which functions independently.

Its subcellular location is the endosome. The catalysed reaction is scytalone = 1,3,8-trihydroxynaphthalene + H2O. The protein operates within pigment biosynthesis; melanin biosynthesis. Its activity is regulated as follows. Fenoxanil inhibits arp1 scytalone dehydratase activity. In terms of biological role, scytalone dehydratase; part of the gene cluster that mediates the biosynthesis of dihydroxynaphthalene (DHN)-melanin, a bluish-green pigment and a structural component of the conidial wall. The first step of the pathway is the production of the heptaketide naphtopyrone YWA1 by the polyketide synthase alb1 though condensation of acetyl-CoA with malonyl-CoA. The naphtopyrone YWA1 is then converted to the pentaketide 1,3,6,8-tetrahydroxynaphthalene (1,3,6,8-THN) by the heptaketide hydrolyase ayg1 though chain-length shortening. 1,3,6,8-THN is substrate of the hydroxynaphthalene reductase arp2 to yield scytalone. The scytalone dehydratase arp1 then reduces scytalone to 1,3,8-THN. 1,3,8-THN is also substrate of the hydroxynaphthalene reductase arp2 to yield vermelone. Vermelone is further converted by the multicopper oxidase abr1 to 1,8-DHN. Finally the laccase abr2 transforms 1,8-DHN to DHN-melanin. DHN-melanin biosynthesis appears to be initiated in endosomes where early enzymes (abl1, ayg1, arp1 and arp2) localize, with exocytosis leading to melanin deposition on the cell surface where late enzymes (abr1 and abr2) localize. DHN-melanin is an important structural component of the outer cell wall and is required for the presence of conidial surface hydrophobins. DHN-melanin also plays a crucial role in fungal virulence, including a protective role against the host's immune defenses. DHN-melanin also protects conidia against amoeba predation. The chain is Scytalone dehydratase arp1 from Aspergillus fumigatus (strain ATCC MYA-4609 / CBS 101355 / FGSC A1100 / Af293) (Neosartorya fumigata).